The following is a 306-amino-acid chain: Non-homologous end joining protein Ku 2 (306 aa).

Positions 21-206 constitute a Ku domain; the sequence is ISFGLVNIGV…EVSKQEIDMA (186 aa). Residues 233–306 form a disordered region; sequence LIDAKTKGTK…GSRDKTRKRA (74 aa). Residues 274 to 290 show a composition bias toward basic residues; it reads RTSRRKTTASASRRRSS. A compositionally biased stretch (basic and acidic residues) spans 291 to 300; that stretch reads SNREKTGSRD.

Belongs to the prokaryotic Ku family. In terms of assembly, homodimer. Interacts with LigD.

Functionally, with LigD forms a non-homologous end joining (NHEJ) DNA repair enzyme, which repairs dsDNA breaks with reduced fidelity. Binds linear dsDNA with 5'- and 3'- overhangs but not closed circular dsDNA nor ssDNA. Recruits and stimulates the ligase activity of LigD. In Saccharopolyspora erythraea (strain ATCC 11635 / DSM 40517 / JCM 4748 / NBRC 13426 / NCIMB 8594 / NRRL 2338), this protein is Non-homologous end joining protein Ku 2.